Here is a 208-residue protein sequence, read N- to C-terminus: uncharacterized protein (208 aa).

Disordered stretches follow at residues 74–117 and 181–208; these read FEYK…RDSP and ESKL…RKFK. Polar residues predominate over residues 184-208; sequence LGSSEDSGTDRFSSNTSGSSGRKFK.

This is an uncharacterized protein from Mus musculus (Mouse).